A 332-amino-acid chain; its full sequence is Cell division protein ZipA (332 aa).

Residues 1-6 (MMQDLR) lie on the Periplasmic side of the membrane. Residues 7-27 (LILIVVGAIAIIALLLHGLWT) form a helical membrane-spanning segment. Residues 28-332 (SRKERSSLFR…RIRDVLKANA (305 aa)) are Cytoplasmic-facing. A compositionally biased stretch (basic and acidic residues) spans 40-51 (PVKRAKKARDET). Residues 40-189 (PVKRAKKARD…VQPAPQQPAE (150 aa)) are disordered. Residues 76-88 (SFDSASVDSSSFD) are compositionally biased toward low complexity. Residues 93-105 (AREDVRSEAKSPF) are compositionally biased toward basic and acidic residues.

It belongs to the ZipA family. In terms of assembly, interacts with FtsZ via their C-terminal domains.

Its subcellular location is the cell inner membrane. In terms of biological role, essential cell division protein that stabilizes the FtsZ protofilaments by cross-linking them and that serves as a cytoplasmic membrane anchor for the Z ring. Also required for the recruitment to the septal ring of downstream cell division proteins. The chain is Cell division protein ZipA from Pectobacterium atrosepticum (strain SCRI 1043 / ATCC BAA-672) (Erwinia carotovora subsp. atroseptica).